The sequence spans 324 residues: Olfactory receptor 5A2 (324 aa).

Residues 1–26 (MAVGRNNTIVTKFILLGLSDHPQMKI) are Extracellular-facing. An N-linked (GlcNAc...) asparagine glycan is attached at Asn6. The helical transmembrane segment at 27 to 47 (FLFMLFLGLYLLTLAWNLSLI) threads the bilayer. Topologically, residues 48–55 (ALIKMDSH) are cytoplasmic. A helical transmembrane segment spans residues 56-76 (LHMPMYFFLSNLSFLDICYVS). Residues 77–100 (STAPKMLSDIITEQKTISFVGCAT) lie on the Extracellular side of the membrane. A disulfide bond links Cys98 and Cys190. The chain crosses the membrane as a helical span at residues 101 to 121 (QYFVFCGMGLTECFLLAAMAY). Topologically, residues 122 to 134 (DRYAAICNPLLYT) are cytoplasmic. Residues 135–155 (VLISHTLCLKMVVGAYVGGFL) form a helical membrane-spanning segment. The Extracellular segment spans residues 156–197 (SSFIETYSVYQHDFCGPYMINHFFCDLPPVLALSCSDTFTSE). Residues 198-218 (VVTFIVSVVVGIVSVLVVLIS) traverse the membrane as a helical segment. Over 219 to 238 (YGYIVAAVVKISSATGRTKA) the chain is Cytoplasmic. Residues 239-259 (FSTCASHLTAVTLFYGSGFFM) form a helical membrane-spanning segment. Residues 260–272 (YMRPSSSYSLNRD) lie on the Extracellular side of the membrane. Residues 273–293 (KVVSIFYALVIPVVNPIIYSF) form a helical membrane-spanning segment. The Cytoplasmic portion of the chain corresponds to 294-324 (RNKEIKNAMRKAMERDPGISHGGPFIFMTLG).

This sequence belongs to the G-protein coupled receptor 1 family.

The protein localises to the cell membrane. Its function is as follows. Odorant receptor. In Homo sapiens (Human), this protein is Olfactory receptor 5A2 (OR5A2).